A 258-amino-acid polypeptide reads, in one-letter code: Type II restriction enzyme HincII (258 aa).

It carries out the reaction Endonucleolytic cleavage of DNA to give specific double-stranded fragments with terminal 5'-phosphates.. A P subtype restriction enzyme that recognizes the double-stranded sequence 5'-GTYRAC-3' and cleaves after Y-3. The polypeptide is Type II restriction enzyme HincII (hincIIR) (Haemophilus influenzae).